The following is a 390-amino-acid chain: Olfactomedin-like protein 3A (390 aa).

A signal peptide spans 1-17 (MRALQLLVLVLSGLVGA). Positions 18-91 (QQQALMDYLE…RVDRVEREMD (74 aa)) form a coiled coil. Residues 130–386 (DCSDMISSIK…QILYKLQLKK (257 aa)) form the Olfactomedin-like domain. Cys-131 and Cys-313 are joined by a disulfide. Asn-169 is a glycosylation site (N-linked (GlcNAc...) asparagine).

The protein belongs to the OLFML3 family.

The protein localises to the secreted. In terms of biological role, secreted scaffold protein that plays an essential role in dorsoventral patterning during early development. Stabilizes axial formation by restricting chordin (CHRD) activity on the dorsal side. Acts by facilitating the association between the tolloid proteases and their substrate chordin (CHRD), leading to enhance chordin (CHRD) degradation. In Danio rerio (Zebrafish), this protein is Olfactomedin-like protein 3A (olfml3a).